Reading from the N-terminus, the 304-residue chain is Aspartate carbamoyltransferase catalytic subunit (304 aa).

Positions 49 and 50 each coordinate carbamoyl phosphate. L-aspartate is bound at residue K77. 3 residues coordinate carbamoyl phosphate: R99, H127, and Q130. Positions 160 and 211 each coordinate L-aspartate. Carbamoyl phosphate-binding residues include A250 and P251. S303 bears the Phosphoserine mark.

The protein belongs to the aspartate/ornithine carbamoyltransferase superfamily. ATCase family. As to quaternary structure, heterododecamer (2C3:3R2) of six catalytic PyrB chains organized as two trimers (C3), and six regulatory PyrI chains organized as three dimers (R2).

The catalysed reaction is carbamoyl phosphate + L-aspartate = N-carbamoyl-L-aspartate + phosphate + H(+). The protein operates within pyrimidine metabolism; UMP biosynthesis via de novo pathway; (S)-dihydroorotate from bicarbonate: step 2/3. Catalyzes the condensation of carbamoyl phosphate and aspartate to form carbamoyl aspartate and inorganic phosphate, the committed step in the de novo pyrimidine nucleotide biosynthesis pathway. This chain is Aspartate carbamoyltransferase catalytic subunit, found in Bacillus subtilis (strain 168).